The following is a 285-amino-acid chain: Nudix hydrolase 15, mitochondrial (285 aa).

The transit peptide at 1–23 (MFLLYRRLPSFARTTTTTLLCKS) directs the protein to the mitochondrion. M24 bears the N-acetylmethionine mark. Disordered stretches follow at residues 51 to 72 (RQYK…TDQE) and 129 to 152 (THSG…GMTA). A Nudix hydrolase domain is found at 99 to 255 (PKRAAVLICL…DKDYMIWGLT (157 aa)). Positions 140–161 (KAEEDDKDDGMTATREAEEEIG) match the Nudix box motif. Mg(2+) is bound by residues E155 and E159.

The protein belongs to the Nudix hydrolase family. It depends on Mg(2+) as a cofactor. The cofactor is Mn(2+). In terms of tissue distribution, expressed in roots, leaves, stems and inflorescences.

The protein localises to the mitochondrion. Functionally, coenzyme A diphosphatase which mediates the cleavage of oxidized CoA. Can use malonyl-CoA, hexanoyl-CoA, lauroyl-CoA, myristoyl-CoA and palmitoyl-CoA as substrates, but not isobutyryl-CoA or propionyl-CoA. The sequence is that of Nudix hydrolase 15, mitochondrial (NUDT15) from Arabidopsis thaliana (Mouse-ear cress).